The primary structure comprises 54 residues: U-myrmicitoxin(01)-Tb5a (54 aa).

The first 26 residues, 1-26, serve as a signal peptide directing secretion; it reads MQLSHLLLAFAMIFVMTIMYAPQVQA. A propeptide spanning residues 27–38 is cleaved from the precursor; it reads DAWADANADADV.

This sequence belongs to the formicidae venom precursor-01 superfamily. Contains 1 disulfide bond. Expressed by the venom gland.

It is found in the secreted. In Tetramorium bicarinatum (Tramp ant), this protein is U-myrmicitoxin(01)-Tb5a.